A 66-amino-acid polypeptide reads, in one-letter code: Large ribosomal subunit protein bL35 (66 aa).

The span at Met-1 to Lys-15 shows a compositional bias: basic residues. A disordered region spans residues Met-1 to Gly-32.

The protein belongs to the bacterial ribosomal protein bL35 family.

This Dinoroseobacter shibae (strain DSM 16493 / NCIMB 14021 / DFL 12) protein is Large ribosomal subunit protein bL35.